A 240-amino-acid polypeptide reads, in one-letter code: Ribonuclease 3 (240 aa).

One can recognise an RNase III domain in the interval 4 to 134 (SRQPLLDALG…LLGAIYLQHG (131 aa)). Mg(2+) is bound at residue Glu-44. Residue Asp-48 is part of the active site. Positions 120 and 123 each coordinate Mg(2+). Glu-123 is an active-site residue. Positions 161–229 (DWKTSLQELT…AAAAWKALEV (69 aa)) constitute a DRBM domain.

It belongs to the ribonuclease III family. In terms of assembly, homodimer. Mg(2+) serves as cofactor.

It is found in the cytoplasm. The enzyme catalyses Endonucleolytic cleavage to 5'-phosphomonoester.. Functionally, digests double-stranded RNA. Involved in the processing of primary rRNA transcript to yield the immediate precursors to the large and small rRNAs (23S and 16S). Processes some mRNAs, and tRNAs when they are encoded in the rRNA operon. Processes pre-crRNA and tracrRNA of type II CRISPR loci if present in the organism. This chain is Ribonuclease 3, found in Mycobacterium bovis (strain ATCC BAA-935 / AF2122/97).